A 374-amino-acid polypeptide reads, in one-letter code: Beta-1,3-N-acetylglucosaminyltransferase lunatic fringe (374 aa).

Topologically, residues 1 to 8 (MLKTYRGK) are cytoplasmic. A helical; Signal-anchor for type II membrane protein transmembrane segment spans residues 9-29 (VVVSLAGATVTCLGFLLFLSQ). At 30-374 (HQRIQADGMQ…TPWCPPQVAY (345 aa)) the chain is on the lumenal side. The N-linked (GlcNAc...) asparagine glycan is linked to asparagine 40. Positions 80–100 (RSRREADKPSEAPGAATDAPP) are disordered. Arginine 123 lines the substrate pocket. Asparagine 162 is a glycosylation site (N-linked (GlcNAc...) asparagine). 2 cysteine pairs are disulfide-bonded: cysteine 163-cysteine 174 and cysteine 192-cysteine 255. Residue aspartate 196 participates in substrate binding. Residue aspartate 197 coordinates Mn(2+). The active site involves aspartate 285. Histidine 309 contributes to the Mn(2+) binding site. Cysteine 359 and cysteine 368 form a disulfide bridge.

It belongs to the glycosyltransferase 31 family. It depends on Mn(2+) as a cofactor. Requires Co(2+) as cofactor. Post-translationally, a soluble form may be derived from the membrane form by proteolytic processing. In the embryo, expressed along the A-P axis of the neural tube, within the lateral plate mesoderm, in the presomitic mesoderm and the somites, in specific rhombomeres of the hindbrain (even-numbered rhombomeres) and in the otic vesicles.

It localises to the golgi apparatus membrane. The enzyme catalyses 3-O-(alpha-L-fucosyl)-L-threonyl-[EGF-like domain protein] + UDP-N-acetyl-alpha-D-glucosamine = 3-O-(N-acetyl-beta-D-glucosaminyl-(1-&gt;3)-alpha-L-fucosyl)-L-threonyl-[EGF-like domain protein] + UDP + H(+). The catalysed reaction is 3-O-(alpha-L-fucosyl)-L-seryl-[EGF-like domain protein] + UDP-N-acetyl-alpha-D-glucosamine = 3-O-(N-acetyl-beta-D-glucosaminyl-(1-&gt;3)-alpha-L-fucosyl)-L-seryl-[EGF-like domain protein] + UDP + H(+). In terms of biological role, glycosyltransferase that initiates the elongation of O-linked fucose residues attached to EGF-like repeats in the extracellular domain of Notch molecules. Involved in the correct formation of boundaries in the somites and hindbrain. Required for Delta-Notch-mediated induction of hypochord cells at the lateral borders of the midline precursor domain. The chain is Beta-1,3-N-acetylglucosaminyltransferase lunatic fringe (lfng) from Danio rerio (Zebrafish).